We begin with the raw amino-acid sequence, 413 residues long: Serine hydroxymethyltransferase (413 aa).

(6S)-5,6,7,8-tetrahydrofolate contacts are provided by residues Leu-120 and Gly-124–Leu-126. An N6-(pyridoxal phosphate)lysine modification is found at Lys-228.

It belongs to the SHMT family. In terms of assembly, homodimer. It depends on pyridoxal 5'-phosphate as a cofactor.

It is found in the cytoplasm. It carries out the reaction (6R)-5,10-methylene-5,6,7,8-tetrahydrofolate + glycine + H2O = (6S)-5,6,7,8-tetrahydrofolate + L-serine. It participates in one-carbon metabolism; tetrahydrofolate interconversion. Its pathway is amino-acid biosynthesis; glycine biosynthesis; glycine from L-serine: step 1/1. Functionally, catalyzes the reversible interconversion of serine and glycine with tetrahydrofolate (THF) serving as the one-carbon carrier. This reaction serves as the major source of one-carbon groups required for the biosynthesis of purines, thymidylate, methionine, and other important biomolecules. Also exhibits THF-independent aldolase activity toward beta-hydroxyamino acids, producing glycine and aldehydes, via a retro-aldol mechanism. This is Serine hydroxymethyltransferase from Agathobacter rectalis (strain ATCC 33656 / DSM 3377 / JCM 17463 / KCTC 5835 / VPI 0990) (Eubacterium rectale).